A 282-amino-acid chain; its full sequence is MAIKKYKSTTNGRRNMTTIDYSAVLTTKNNPEKSLVVSKNSKAGRNNRGLITTRHKGGGHKQKYRIIDFKRNKRDIFGTISTIEYDPNRNAFICLINYVDGEKRYILFAKGMQVGMKVVASENADIKVGNVAPLKNIPEGTLLHNVELKPGKGGQIARSAGSSVQLLGKDDDGKYVTLRLSSGEVRKVLAECYATIGEVGNEEYNLVNWGKAGRNRWRGIRPTVRGSVMNPNDHPHGGGEGRAPIGRKSPVTPWGKKALGVKTRNTKKTSEKLIVRKRSNKK.

Residues 223–282 are disordered; the sequence is TVRGSVMNPNDHPHGGGEGRAPIGRKSPVTPWGKKALGVKTRNTKKTSEKLIVRKRSNKK.

This sequence belongs to the universal ribosomal protein uL2 family. As to quaternary structure, part of the 50S ribosomal subunit. Forms a bridge to the 30S subunit in the 70S ribosome.

One of the primary rRNA binding proteins. Required for association of the 30S and 50S subunits to form the 70S ribosome, for tRNA binding and peptide bond formation. It has been suggested to have peptidyltransferase activity; this is somewhat controversial. Makes several contacts with the 16S rRNA in the 70S ribosome. This Mycoplasma mycoides subsp. mycoides SC (strain CCUG 32753 / NCTC 10114 / PG1) protein is Large ribosomal subunit protein uL2.